The chain runs to 215 residues: Cytochrome b6 (215 aa).

A helical membrane pass occupies residues 32–52 (IFYCLGGITLTCFLVQVATGF). Residue Cys-35 participates in heme c binding. Heme b-binding residues include His-86 and His-100. The next 3 membrane-spanning stretches (helical) occupy residues 90–110 (ASMMVLMMILHVFRVYLTGGF), 116–136 (LTWVTGVVLAVLTASFGVTGY), and 186–206 (LHTFVLPLLTAVFMLMHFPMI). Residues His-187 and His-202 each contribute to the heme b site.

Belongs to the cytochrome b family. PetB subfamily. The 4 large subunits of the cytochrome b6-f complex are cytochrome b6, subunit IV (17 kDa polypeptide, PetD), cytochrome f and the Rieske protein, while the 4 small subunits are PetG, PetL, PetM and PetN. The complex functions as a dimer. The cofactor is heme b. Requires heme c as cofactor.

The protein resides in the plastid. It is found in the chloroplast thylakoid membrane. In terms of biological role, component of the cytochrome b6-f complex, which mediates electron transfer between photosystem II (PSII) and photosystem I (PSI), cyclic electron flow around PSI, and state transitions. The chain is Cytochrome b6 from Solanum bulbocastanum (Wild potato).